We begin with the raw amino-acid sequence, 266 residues long: Enterotoxin type C-2 (266 aa).

A signal peptide spans 1–27; it reads MNKSRFISCVILIFALILVLFTPNVLA. Zn(2+) is bound by residues Asp-36, His-74, Glu-98, Glu-107, and Asp-110. A disulfide bridge links Cys-120 with Cys-137. The Zn(2+) site is built by His-145, Glu-146, and His-149.

This sequence belongs to the staphylococcal/streptococcal toxin family. Interacts with host MHC class II molecules composed of alpha/HLA-DRA and beta/HLA-DRB1 chains. Zn(2+) is required as a cofactor.

It localises to the secreted. In terms of biological role, staphylococcal enterotoxin that activates the host immune system by binding as unprocessed molecules to major histocompatibility (MHC) complex class II and T-cell receptor (TCR) molecules. In turn, this ternary complex activates a large number of T-lymphocytes initiating a systemic release of pro-inflammatory cytokines. Also causes the intoxication staphylococcal food poisoning syndrome. This Staphylococcus aureus protein is Enterotoxin type C-2 (entC2).